A 61-amino-acid polypeptide reads, in one-letter code: Translational regulator CsrA (61 aa).

The protein belongs to the CsrA/RsmA family. Homodimer; the beta-strands of each monomer intercalate to form a hydrophobic core, while the alpha-helices form wings that extend away from the core.

Its subcellular location is the cytoplasm. Its function is as follows. A key translational regulator that binds mRNA to regulate translation initiation and/or mRNA stability. Mediates global changes in gene expression, shifting from rapid growth to stress survival by linking envelope stress, the stringent response and the catabolite repression systems. Usually binds in the 5'-UTR; binding at or near the Shine-Dalgarno sequence prevents ribosome-binding, repressing translation, binding elsewhere in the 5'-UTR can activate translation and/or stabilize the mRNA. Its function is antagonized by small RNA(s). The protein is Translational regulator CsrA of Mannheimia succiniciproducens (strain KCTC 0769BP / MBEL55E).